Reading from the N-terminus, the 492-residue chain is Probable ATP-citrate synthase subunit 2 (492 aa).

Ser24 carries the phosphoserine modification.

In the N-terminal section; belongs to the succinate/malate CoA ligase beta subunit family. This sequence in the C-terminal section; belongs to the succinate/malate CoA ligase alpha subunit family. As to quaternary structure, composed of two subunits.

Its subcellular location is the cytoplasm. The protein resides in the nucleus. The catalysed reaction is oxaloacetate + acetyl-CoA + ADP + phosphate = citrate + ATP + CoA. In terms of biological role, ATP citrate-lyase is the primary enzyme responsible for the synthesis of cytosolic acetyl-CoA. Has a central role in de novo lipid synthesis. The polypeptide is Probable ATP-citrate synthase subunit 2 (Schizosaccharomyces pombe (strain 972 / ATCC 24843) (Fission yeast)).